The following is a 943-amino-acid chain: Protein translocase subunit SecA (943 aa).

Residues glutamine 77, 95-99, and aspartate 484 contribute to the ATP site; that span reads GEGKT.

Belongs to the SecA family. In terms of assembly, monomer and homodimer. Part of the essential Sec protein translocation apparatus which comprises SecA, SecYEG and auxiliary proteins SecDF. Other proteins may also be involved.

Its subcellular location is the cell membrane. It is found in the cytoplasm. It catalyses the reaction ATP + H2O + cellular proteinSide 1 = ADP + phosphate + cellular proteinSide 2.. Its function is as follows. Part of the Sec protein translocase complex. Interacts with the SecYEG preprotein conducting channel. Has a central role in coupling the hydrolysis of ATP to the transfer of proteins into and across the cell membrane, serving as an ATP-driven molecular motor driving the stepwise translocation of polypeptide chains across the membrane. This chain is Protein translocase subunit SecA, found in Mesoplasma florum (strain ATCC 33453 / NBRC 100688 / NCTC 11704 / L1) (Acholeplasma florum).